A 222-amino-acid chain; its full sequence is MKQKRYALIVAGGHGLRMGADRPKQFLLLAGLPVLMHTLNRFAPHVDAIVLVLPTDHHAYWQELCRKYDFSVSHRVVAGGNTRFASVRNGLQVVPDGVLVAVHDGVRPLVSAETIDACFDLAELKGAVAPCRPMTESLRYYATDGNYAVDRSRYVTVQTPQTFRSEWLREAYRQPYEEYFTDDCSVYEHHFGRPVALIVGNIENIKLTTPLDLSLAKLLLTS.

The protein belongs to the IspD/TarI cytidylyltransferase family. IspD subfamily.

It catalyses the reaction 2-C-methyl-D-erythritol 4-phosphate + CTP + H(+) = 4-CDP-2-C-methyl-D-erythritol + diphosphate. Its pathway is isoprenoid biosynthesis; isopentenyl diphosphate biosynthesis via DXP pathway; isopentenyl diphosphate from 1-deoxy-D-xylulose 5-phosphate: step 2/6. In terms of biological role, catalyzes the formation of 4-diphosphocytidyl-2-C-methyl-D-erythritol from CTP and 2-C-methyl-D-erythritol 4-phosphate (MEP). This chain is 2-C-methyl-D-erythritol 4-phosphate cytidylyltransferase, found in Porphyromonas gingivalis (strain ATCC 33277 / DSM 20709 / CIP 103683 / JCM 12257 / NCTC 11834 / 2561).